We begin with the raw amino-acid sequence, 493 residues long: Alpha-amylase-related protein (493 aa).

An N-terminal signal peptide occupies residues 1 to 19 (MFKFALTQTLCLAGSLSLA). Q20 carries the pyrrolidone carboxylic acid modification. A disulfide bond links C47 and C103. Residues N117, Q168, and D177 each contribute to the Ca(2+) site. The cysteines at positions 156 and 170 are disulfide-linked. Residue R205 coordinates chloride. The Nucleophile role is filled by D207. Residue H211 coordinates Ca(2+). The Proton donor role is filled by E244. Residues N307 and R342 each contribute to the chloride site. 3 disulfides stabilise this stretch: C375-C381, C417-C440, and C447-C459.

The protein belongs to the glycosyl hydrolase 13 family. As to quaternary structure, monomer. The cofactor is Ca(2+). Chloride serves as cofactor.

It localises to the secreted. It carries out the reaction Endohydrolysis of (1-&gt;4)-alpha-D-glucosidic linkages in polysaccharides containing three or more (1-&gt;4)-alpha-linked D-glucose units.. The chain is Alpha-amylase-related protein (Amyrel) from Drosophila mauritiana (Fruit fly).